The chain runs to 166 residues: NAD(P)H-quinone oxidoreductase subunit I, chloroplastic (166 aa).

2 consecutive 4Fe-4S ferredoxin-type domains span residues glycine 55–lysine 84 and leucine 95–glutamate 124. [4Fe-4S] cluster contacts are provided by cysteine 64, cysteine 67, cysteine 70, cysteine 74, cysteine 104, cysteine 107, cysteine 110, and cysteine 114.

The protein belongs to the complex I 23 kDa subunit family. As to quaternary structure, NDH is composed of at least 16 different subunits, 5 of which are encoded in the nucleus. The cofactor is [4Fe-4S] cluster.

It is found in the plastid. Its subcellular location is the chloroplast thylakoid membrane. It catalyses the reaction a plastoquinone + NADH + (n+1) H(+)(in) = a plastoquinol + NAD(+) + n H(+)(out). It carries out the reaction a plastoquinone + NADPH + (n+1) H(+)(in) = a plastoquinol + NADP(+) + n H(+)(out). NDH shuttles electrons from NAD(P)H:plastoquinone, via FMN and iron-sulfur (Fe-S) centers, to quinones in the photosynthetic chain and possibly in a chloroplast respiratory chain. The immediate electron acceptor for the enzyme in this species is believed to be plastoquinone. Couples the redox reaction to proton translocation, and thus conserves the redox energy in a proton gradient. The sequence is that of NAD(P)H-quinone oxidoreductase subunit I, chloroplastic from Oblivia mikanioides (Salmea mikanioides).